The primary structure comprises 198 residues: HTH-type transcriptional regulator BetI (198 aa).

The 61-residue stretch at Pro8 to Leu68 folds into the HTH tetR-type domain. Positions Thr31–Phe50 form a DNA-binding region, H-T-H motif.

The protein operates within amine and polyamine biosynthesis; betaine biosynthesis via choline pathway [regulation]. Its function is as follows. Repressor involved in the biosynthesis of the osmoprotectant glycine betaine. It represses transcription of the choline transporter BetT and the genes of BetAB involved in the synthesis of glycine betaine. The polypeptide is HTH-type transcriptional regulator BetI (Brucella abortus (strain 2308)).